Reading from the N-terminus, the 40-residue chain is Large ribosomal subunit protein bL36B (40 aa).

It belongs to the bacterial ribosomal protein bL36 family.

The polypeptide is Large ribosomal subunit protein bL36B (Arthrobacter sp. (strain FB24)).